Consider the following 230-residue polypeptide: Acyl-protein thioesterase 1 (230 aa).

Catalysis depends on charge relay system residues Ser119, Asp174, and His208. N6-acetyllysine is present on Lys224.

This sequence belongs to the AB hydrolase superfamily. AB hydrolase 2 family. As to quaternary structure, homodimer.

The protein resides in the cytoplasm. It is found in the cell membrane. It localises to the nucleus membrane. Its subcellular location is the endoplasmic reticulum. It catalyses the reaction S-hexadecanoyl-L-cysteinyl-[protein] + H2O = L-cysteinyl-[protein] + hexadecanoate + H(+). It carries out the reaction 1-hexadecanoyl-sn-glycero-3-phosphocholine + H2O = sn-glycerol 3-phosphocholine + hexadecanoate + H(+). The catalysed reaction is a 1-(9Z-octadecenoyl)-2-acyl-sn-glycero-3-phosphocholine + H2O = a 2-acyl-sn-glycero-3-phosphocholine + (9Z)-octadecenoate + H(+). In terms of biological role, acts as an acyl-protein thioesterase. Hydrolyzes fatty acids from S-acylated cysteine residues in proteins such as trimeric G alpha proteins or HRAS. Acts as a palmitoyl thioesterase that catalyzes depalmitoylation of proteins, such as ADRB2, KCNMA1 and SQSTM1. Acts as a negative regulator of autophagy by mediating palmitoylation of SQSTM1, decreasing affinity between SQSTM1 and ATG8 proteins and recruitment of ubiquitinated cargo proteins to autophagosomes. Acts as a lysophospholipase and hydrolyzes lysophosphatidylcholine (lyso-PC). Also hydrolyzes lysophosphatidylethanolamine (lyso-PE), lysophosphatidylinositol (lyso-PI) and lysophosphatidylserine (lyso-PS). Has much higher thioesterase activity than lysophospholipase activity. Contributes to the production of lysophosphatidic acid (LPA) during blood coagulation by recognizing and cleaving plasma phospholipids to generate lysophospholipids which in turn act as substrates for ENPP2 to produce LPA. In Pongo abelii (Sumatran orangutan), this protein is Acyl-protein thioesterase 1 (LYPLA1).